The sequence spans 328 residues: Serine protease 48 (328 aa).

Positions 1-20 (MGPAGCAFTLLLLLGISVCG) are cleaved as a signal peptide. One can recognise a Peptidase S1 domain in the interval 28–267 (VVGGQDAAAG…YQKWINATIS (240 aa)). C53 and C69 are oxidised to a cystine. Residues H68 and D114 each act as charge relay system in the active site. Intrachain disulfides connect C148/C226, C181/C205, and C216/C244. Catalysis depends on S220, which acts as the Charge relay system. N-linked (GlcNAc...) asparagine glycosylation is present at N263.

The protein belongs to the peptidase S1 family.

It localises to the secreted. This is Serine protease 48 (PRSS48) from Homo sapiens (Human).